A 228-amino-acid chain; its full sequence is Ribose-5-phosphate isomerase A (228 aa).

Substrate contacts are provided by residues 32 to 35, 85 to 88, and 98 to 101; these read TGST, DGAD, and KGGG. Catalysis depends on E107, which acts as the Proton acceptor. K125 lines the substrate pocket.

It belongs to the ribose 5-phosphate isomerase family. In terms of assembly, homodimer.

The enzyme catalyses aldehydo-D-ribose 5-phosphate = D-ribulose 5-phosphate. It functions in the pathway carbohydrate degradation; pentose phosphate pathway; D-ribose 5-phosphate from D-ribulose 5-phosphate (non-oxidative stage): step 1/1. Its function is as follows. Catalyzes the reversible conversion of ribose-5-phosphate to ribulose 5-phosphate. This Cupriavidus necator (strain ATCC 17699 / DSM 428 / KCTC 22496 / NCIMB 10442 / H16 / Stanier 337) (Ralstonia eutropha) protein is Ribose-5-phosphate isomerase A.